The chain runs to 274 residues: Bis(5'-nucleosyl)-tetraphosphatase, symmetrical (274 aa).

Belongs to the Ap4A hydrolase family.

The enzyme catalyses P(1),P(4)-bis(5'-adenosyl) tetraphosphate + H2O = 2 ADP + 2 H(+). In terms of biological role, hydrolyzes diadenosine 5',5'''-P1,P4-tetraphosphate to yield ADP. This chain is Bis(5'-nucleosyl)-tetraphosphatase, symmetrical, found in Shewanella baltica (strain OS195).